The following is a 215-amino-acid chain: Probable GTP-binding protein EngB (215 aa).

The region spanning Glu-26–Pro-200 is the EngB-type G domain. GTP contacts are provided by residues Gly-34–Ser-41, Gly-61–Leu-65, Asp-79–Gly-82, Thr-146–Asp-149, and Phe-179–Ser-181. Mg(2+) contacts are provided by Ser-41 and Thr-63.

It belongs to the TRAFAC class TrmE-Era-EngA-EngB-Septin-like GTPase superfamily. EngB GTPase family. It depends on Mg(2+) as a cofactor.

In terms of biological role, necessary for normal cell division and for the maintenance of normal septation. The sequence is that of Probable GTP-binding protein EngB from Aliivibrio fischeri (strain ATCC 700601 / ES114) (Vibrio fischeri).